The following is a 169-amino-acid chain: MYTSGYANRSSSFPTTTHNAALTATENAAAGLVSEVVYHEDQPMMAQLLLLPLLRQLGQQSRWQLWLTPQQKLSREWVQSSGLPLTKVMQISQLAPRHTLESMIRALRTGNYSVVIGWMTEELTEEEHASLVEAAKVGNAVGFIMRPVRAHALSRRQHSGLKIHSNLYH.

Residues alanine 106–tyrosine 112 form a ftsZ binding region. The tract at residues lysine 162 to histidine 169 is lon protease binding.

It belongs to the SulA family. In terms of assembly, interacts with FtsZ. In terms of processing, is rapidly cleaved and degraded by the Lon protease once DNA damage is repaired.

Component of the SOS system and an inhibitor of cell division. Accumulation of SulA causes rapid cessation of cell division and the appearance of long, non-septate filaments. In the presence of GTP, binds a polymerization-competent form of FtsZ in a 1:1 ratio, thus inhibiting FtsZ polymerization and therefore preventing it from participating in the assembly of the Z ring. This mechanism prevents the premature segregation of damaged DNA to daughter cells during cell division. This is Cell division inhibitor SulA from Salmonella gallinarum (strain 287/91 / NCTC 13346).